The chain runs to 196 residues: Ribonuclease HII (196 aa).

The 193-residue stretch at 4–196 (IWVCGVDEAG…PVRRVLEGSF (193 aa)) folds into the RNase H type-2 domain. Residues Asp10, Glu11, and Asp106 each contribute to the a divalent metal cation site.

It belongs to the RNase HII family. Requires Mn(2+) as cofactor. The cofactor is Mg(2+).

It localises to the cytoplasm. The catalysed reaction is Endonucleolytic cleavage to 5'-phosphomonoester.. Functionally, endonuclease that specifically degrades the RNA of RNA-DNA hybrids. In Polynucleobacter asymbioticus (strain DSM 18221 / CIP 109841 / QLW-P1DMWA-1) (Polynucleobacter necessarius subsp. asymbioticus), this protein is Ribonuclease HII.